Here is a 429-residue protein sequence, read N- to C-terminus: Forkhead box protein P3 (429 aa).

The tract at residues 1–67 is disordered; it reads MPNPRPAKPM…SSLNPLPPSQ (67 aa). Serine 19 bears the Phosphoserine; by CDK2 mark. The residue at position 31 (lysine 31) is an N6-acetyllysine. Low complexity predominate over residues 56–67; sequence TSSSLNPLPPSQ. The short motif at 67 to 75 is the Nuclear export signal element; the sequence is QLQLPTVPL. The short motif at 91–95 is the LXXLL motif element; the sequence is LQALL. Residues 105–189 form an essential for transcriptional repressor activity and for interaction with KAT5 and HDAC7 region; the sequence is LSTVDAHAQT…SNLLAAPQGS (85 aa). Positions 148–198 are interaction with IKZF4; sequence LPPGINVASLEWVSREPALLCTFPRSGTPRKDSNLLAAPQGSYPLLANGVC. Threonine 175 bears the Phosphothreonine; by CDK2 mark. A C2H2-type zinc finger spans residues 196-221; sequence GVCKWPGCEKVFEEPEEFLKHCQADH. Residues 238–247 carry the Nuclear export signal motif; sequence VQSLEQQLEL. Residues 238–259 are leucine-zipper; the sequence is VQSLEQQLELEKEKLGAMQAHL. Residues lysine 249 and lysine 251 each participate in a glycyl lysine isopeptide (Lys-Gly) (interchain with G-Cter in ubiquitin) cross-link. An N6-acetyllysine; alternate mark is found at lysine 262 and lysine 267. Residues lysine 262 and lysine 267 each participate in a glycyl lysine isopeptide (Lys-Gly) (interchain with G-Cter in ubiquitin); alternate cross-link. Residues 277-336 form an interaction with RUNX1 region; that stretch reads SSCCIVATSTQGSVLPAWSAPREAPDGGLFAVRRHLWGSHGNSSFPEFFHNMDYFKYHNM. Residues 337–423 constitute a DNA-binding region (fork-head); it reads RPPFTYATLI…RKKRSQRPNK (87 aa). A Glycyl lysine isopeptide (Lys-Gly) (interchain with G-Cter in ubiquitin) cross-link involves residue lysine 393. The Nuclear localization signal motif lies at 414–417; that stretch reads RKKR. The residue at position 418 (serine 418) is a Phosphoserine. A propeptide spanning residues 418–429 is cleaved from the precursor; that stretch reads SQRPNKCSNPCP.

As to quaternary structure, homodimer. Dimerization is essential for its transcriptional regulator activity. Interacts with IKZF3. Interacts (via LXXLL motif) with isoform 4 of RORA (via AF-2 motif). Interacts with STUB1 and HSPA1A/B. Interacts with IKZF4, HDAC7 and KAT5. Interacts with RUNX1, RUNX2, RUNX3 and NFATC2. Interacts with RORC. Interacts with HDAC9 in the absence of T-cell stimulation. Interacts with RELA, PPP1CA, PPP1CB, PPP1CG, HSPA8 and USP7. In terms of processing, acetylation on lysine residues stabilizes FOXP3 and promotes differentiation of T-cells into induced regulatory T-cells (iTregs) associated with suppressive functions. Acetylation is mediated by a coordinated action of KAT5 and EP300/p300 acetyltransferases: EP300/p300 is required to enhance KAT5 autoacetylation, promoting acetylation of FOXP3 by KAT5. Deacetylated by SIRT1. Polyubiquitinated, leading to its proteasomal degradation in regulatory T-cells (Treg) which is mediated by STUB1 in a HSPA1A/B-dependent manner. Deubiquitinated by USP7 and USP44 leading to increase in protein stability. Post-translationally, phosphorylation at Ser-418 regulates its transcriptional repressor activity and consequently, regulatory T-cells (Treg) suppressive function. Phosphorylation by CDK2 negatively regulates its transcriptional activity and protein stability. In terms of processing, undergoes proteolytic cleavage in activated regulatory T-cells (Treg), and can be cleaved at either the N- or C-terminal site, or at both sites. Treg expressing the form cleaved at C-terminal site or both N- and C-terminal sites exhibit an increased induction of IL10 and an increased capacity to suppress proliferation of conventional T-cells in vitro. Treg expressing the form cleaved at only the C-terminal site are highly effective at preventing experimental colitis in an in vivo model of inflammatory bowel disease. In terms of tissue distribution, high level of expression in thymus and spleen.

It is found in the nucleus. The protein localises to the cytoplasm. Its function is as follows. Transcriptional regulator which is crucial for the development and inhibitory function of regulatory T-cells (Treg). Plays an essential role in maintaining homeostasis of the immune system by allowing the acquisition of full suppressive function and stability of the Treg lineage, and by directly modulating the expansion and function of conventional T-cells. Can act either as a transcriptional repressor or a transcriptional activator depending on its interactions with other transcription factors, histone acetylases and deacetylases. The suppressive activity of Treg involves the coordinate activation of many genes, including CTLA4 and TNFRSF18 by FOXP3 along with repression of genes encoding cytokines such as interleukin-2 (IL2) and interferon-gamma (IFNG). Inhibits cytokine production and T-cell effector function by repressing the activity of two key transcription factors, RELA and NFATC2. Mediates transcriptional repression of IL2 via its association with histone acetylase KAT5 and histone deacetylase HDAC7. Can activate the expression of TNFRSF18, IL2RA and CTLA4 and repress the expression of IL2 and IFNG via its association with transcription factor RUNX1. Inhibits the differentiation of IL17 producing helper T-cells (Th17) by antagonizing RORC function, leading to down-regulation of IL17 expression, favoring Treg development. Inhibits the transcriptional activator activity of RORA. Can repress the expression of IL2 and IFNG via its association with transcription factor IKZF4. The chain is Forkhead box protein P3 (Foxp3) from Mus musculus (Mouse).